The chain runs to 358 residues: Trace amine-associated receptor 7f (358 aa).

Over 1–47 the chain is Extracellular; it reads MSIADETVSWNQDSILSRDLFSATSAELCYENLNRSCVRSPYSPGPR. Asn-34 is a glycosylation site (N-linked (GlcNAc...) asparagine). 2 cysteine pairs are disulfide-bonded: Cys-37-Cys-201 and Cys-120-Cys-205. A helical membrane pass occupies residues 48–68; it reads LILYAVFGFGAVLAVCGNLLV. Topologically, residues 69–83 are cytoplasmic; it reads MTSILHFRQLHSPAN. The helical transmembrane segment at 84-104 threads the bilayer; the sequence is FLVASLACADFLVGVMVMPFS. Residues 105–121 are Extracellular-facing; sequence MVRSVEGCWYFGDSYCK. Residues 122–143 traverse the membrane as a helical segment; that stretch reads LHTCFDVSFCYCSLFHLCFISV. Residues 144 to 166 lie on the Cytoplasmic side of the membrane; the sequence is DRYIAVSDPLAYPTRFTASVSGK. The chain crosses the membrane as a helical span at residues 167-187; that stretch reads CITFSWLLSISYGFSLIYTGA. The Extracellular segment spans residues 188-212; sequence SEAGLEDLVSSLTCVGGCQIAVNQT. N-linked (GlcNAc...) asparagine glycosylation is present at Asn-210. Residues 213–233 form a helical membrane-spanning segment; that stretch reads WVFINFSVFLIPTLVMITVYS. Over 234 to 274 the chain is Cytoplasmic; the sequence is KIFLIAKQQAQNIEKMSKQTARASDSYKDRVAKRERKAAKT. The chain crosses the membrane as a helical span at residues 275 to 295; it reads LGIAVAAFLLSWLPYFIDSFI. At 296 to 309 the chain is on the extracellular side; that stretch reads DAFLGFITPTYVYE. Residues 310–333 traverse the membrane as a helical segment; it reads ILVWIVYYNSAMNPLIYAFFYPWF. Over 334-358 the chain is Cytoplasmic; sequence RKAIKLTVTGKILRENSSTTNLFSE.

Belongs to the G-protein coupled receptor 1 family. In terms of tissue distribution, specifically expressed in neurons of the olfactory epithelium.

The protein localises to the cell membrane. In terms of biological role, olfactory receptor activated by trace amines, such as N-methylpiperidine and N,N-dimethylcyclohexylamine. Trace amine compounds are enriched in animal body fluids and act on trace amine-associated receptors (TAARs) to elicit both intraspecific and interspecific innate behaviors. Ligand-binding causes a conformation change that triggers signaling via G(s)-class of G alpha proteins (GNAL or GNAS). The sequence is that of Trace amine-associated receptor 7f from Mus musculus (Mouse).